The chain runs to 603 residues: Variable flagella 3 (603 aa).

Residues 169-289 (GGEVSAELRR…TEDLEARDRR (121 aa)) are a coiled coil. Positions 288–297 (RRMNSTDRIR) are enriched in basic and acidic residues. Disordered regions lie at residues 288–526 (RRMN…PARA) and 539–564 (AGRG…SSKS). Residues 337-348 (SRSNSRGRGTSS) show a composition bias toward low complexity. Over residues 364–380 (PRFDPTEYVRQRKERES) the composition is skewed to basic and acidic residues. The segment covering 397 to 406 (AGTSRASSVV) has biased composition (polar residues). The segment covering 486–510 (GASGGGAGGWSKFPGGGGGGVGGSG) has biased composition (gly residues). Polar residues predominate over residues 511-520 (QRISSNSPRS).

This sequence belongs to the CCDC61 family.

It is found in the cytoplasm. The protein localises to the cytoskeleton. Its subcellular location is the flagellum basal body. In terms of biological role, required for normal flagella and striated fiber formation. The polypeptide is Variable flagella 3 (Chlamydomonas reinhardtii (Chlamydomonas smithii)).